Here is a 197-residue protein sequence, read N- to C-terminus: ATP-dependent Clp protease proteolytic subunit 1 (197 aa).

His-126 is an active-site residue.

It belongs to the peptidase S14 family. As to quaternary structure, fourteen ClpP subunits assemble into 2 heptameric rings which stack back to back to give a disk-like structure with a central cavity, resembling the structure of eukaryotic proteasomes.

The protein resides in the cytoplasm. The catalysed reaction is Hydrolysis of proteins to small peptides in the presence of ATP and magnesium. alpha-casein is the usual test substrate. In the absence of ATP, only oligopeptides shorter than five residues are hydrolyzed (such as succinyl-Leu-Tyr-|-NHMec, and Leu-Tyr-Leu-|-Tyr-Trp, in which cleavage of the -Tyr-|-Leu- and -Tyr-|-Trp bonds also occurs).. In terms of biological role, cleaves peptides in various proteins in a process that requires ATP hydrolysis. Has a chymotrypsin-like activity. Plays a major role in the degradation of misfolded proteins. The protein is ATP-dependent Clp protease proteolytic subunit 1 of Nocardia farcinica (strain IFM 10152).